Here is a 793-residue protein sequence, read N- to C-terminus: 28S rRNA (cytosine-C(5))-methyltransferase (793 aa).

The segment at 1 to 194 (MGRKLDPTKK…RKDDKAEGDL (194 aa)) is disordered. Positions 1-355 (MGRKLDPTKK…YLAGHYMLQG (355 aa)) are N-terminal domain. Composition is skewed to basic residues over residues 10–22 (KEKRGPGRKARKQ) and 44–57 (LSSRARKRAAKRRA). The interaction with NPM1 stretch occupies residues 25-57 (AETELVRFLPAAGDENSKRLSSRARKRAAKRRA). The short motif at 41–58 (SKRLSSRARKRAAKRRAG) is the Nucleolar localization signal element. Residues Ser59 and Ser68 each carry the phosphoserine modification. Lys72 participates in a covalent cross-link: Glycyl lysine isopeptide (Lys-Gly) (interchain with G-Cter in SUMO2). Arg86 carries the citrulline modification. 2 stretches are compositionally biased toward acidic residues: residues 98–110 (DGDEEEDSGEDDV) and 118–128 (GSEDSDEDMVD). At Arg148 the chain carries Citrulline. The segment covering 165 to 178 (NEEDTDEDEDDDGV) has biased composition (acidic residues). Position 169 is a phosphothreonine (Thr169). Position 179 is a phosphoserine (Ser179). Over residues 182-192 (SHPRKDDKAEG) the composition is skewed to basic and acidic residues. Lys257 participates in a covalent cross-link: Glycyl lysine isopeptide (Lys-Gly) (interchain with G-Cter in SUMO2). The tract at residues 356–579 (ASSMLPVMAL…KKFSNSIPQP (224 aa)) is catalytic domain. Residues 377 to 383 (CCAPGGK), Asp401, Asp428, and Asp445 contribute to the S-adenosyl-L-methionine site. Catalysis depends on Cys502, which acts as the Nucleophile. The disordered stretch occupies residues 576 to 793 (IPQPHAGNSA…TKGNSQPLLS (218 aa)). A C-terminal domain region spans residues 580-793 (HAGNSAAATP…TKGNSQPLLS (214 aa)). Over residues 599–609 (TPKSENGSQPT) the composition is skewed to polar residues. Residue Lys601 forms a Glycyl lysine isopeptide (Lys-Gly) (interchain with G-Cter in SUMO2) linkage. At Lys634 the chain carries N6-acetyllysine. The residue at position 649 (Ser649) is a Phosphoserine. Residues 654-668 (QVSTRPSQSAGNADV) are compositionally biased toward polar residues. Residues 671 to 686 (KRKRSEKLKQRGPKWK) show a composition bias toward basic residues. Ser713, Ser767, Ser782, and Ser793 each carry phosphoserine. The span at 784 to 793 (TKGNSQPLLS) shows a compositional bias: polar residues.

The protein belongs to the class I-like SAM-binding methyltransferase superfamily. RsmB/NOP family. As to quaternary structure, interacts with MCRS1. Interacts with WDR46. Interacts with RRP1B. Interacts with NPM1, NOP56, FBL, RUVBL1 and NUFIP1. Post-translationally, citrullinated by PADI4.

Its subcellular location is the nucleus. The protein resides in the nucleolus. The enzyme catalyses a cytidine in 28S rRNA + S-adenosyl-L-methionine = a 5-methylcytidine in 28S rRNA + S-adenosyl-L-homocysteine + H(+). Functionally, S-adenosyl-L-methionine-dependent methyltransferase that specifically methylates the C(5) position of cytosine 4447 in 28S rRNA. Required for efficient rRNA processing and 60S ribosomal subunit biogenesis. Regulates pre-rRNA processing through non-catalytic complex formation with box C/D snoRNAs and facilitates the recruitment of U3 and U8 snoRNAs to pre-90S ribosomal particles and their stable assembly into snoRNP complexes. May play a role in the regulation of the cell cycle and the increased nucleolar activity that is associated with the cell proliferation. This Mus musculus (Mouse) protein is 28S rRNA (cytosine-C(5))-methyltransferase (Nop2).